A 131-amino-acid polypeptide reads, in one-letter code: ATP synthase epsilon chain (131 aa).

Belongs to the ATPase epsilon chain family. In terms of assembly, F-type ATPases have 2 components, CF(1) - the catalytic core - and CF(0) - the membrane proton channel. CF(1) has five subunits: alpha(3), beta(3), gamma(1), delta(1), epsilon(1). CF(0) has three main subunits: a, b and c.

It localises to the cell membrane. In terms of biological role, produces ATP from ADP in the presence of a proton gradient across the membrane. The protein is ATP synthase epsilon chain of Bacillus licheniformis (strain ATCC 14580 / DSM 13 / JCM 2505 / CCUG 7422 / NBRC 12200 / NCIMB 9375 / NCTC 10341 / NRRL NRS-1264 / Gibson 46).